A 156-amino-acid polypeptide reads, in one-letter code: SsrA-binding protein (156 aa).

The segment covering 135–150 (KRDTIKDREWQRDRSR) has biased composition (basic and acidic residues). The interval 135-156 (KRDTIKDREWQRDRSRIMKKNT) is disordered.

The protein belongs to the SmpB family.

It localises to the cytoplasm. Required for rescue of stalled ribosomes mediated by trans-translation. Binds to transfer-messenger RNA (tmRNA), required for stable association of tmRNA with ribosomes. tmRNA and SmpB together mimic tRNA shape, replacing the anticodon stem-loop with SmpB. tmRNA is encoded by the ssrA gene; the 2 termini fold to resemble tRNA(Ala) and it encodes a 'tag peptide', a short internal open reading frame. During trans-translation Ala-aminoacylated tmRNA acts like a tRNA, entering the A-site of stalled ribosomes, displacing the stalled mRNA. The ribosome then switches to translate the ORF on the tmRNA; the nascent peptide is terminated with the 'tag peptide' encoded by the tmRNA and targeted for degradation. The ribosome is freed to recommence translation, which seems to be the essential function of trans-translation. The sequence is that of SsrA-binding protein from Legionella pneumophila (strain Paris).